The primary structure comprises 950 residues: Serine/threonine-protein phosphatase 4 regulatory subunit 1 (950 aa).

HEAT repeat units lie at residues 1 to 25 (MADL…DYSS), 26 to 63 (ESDV…IFNR), 65 to 81 (MVAR…CDDE), 82 to 119 (RDCI…FCQE), 127 to 164 (AFSK…QELI), 168 to 206 (DVET…MVGK), 208 to 246 (ITER…VVGQ), 248 to 285 (ATEE…ATCQ), and 287 to 324 (IRRT…TFAN). Disordered regions lie at residues 326-374 (SSSG…SVSN), 413-438 (ESHQ…RPEV), and 473-499 (EQNS…SPNI). Positions 332–365 (FKEESKSSEEMSVENKNRTRDQEAPEDVQVRPED) are enriched in basic and acidic residues. HEAT repeat units follow at residues 505-542 (KELE…LDAH), 568-606 (INQE…FSPD), 698-734 (LTAA…LLHI), 799-837 (WISY…RCPK), and 861-898 (QFAV…EKDY). At Ser935 the chain carries Phosphoserine.

In terms of assembly, serine/threonine-protein phosphatase 4 (PP4) occurs in different assemblies of the catalytic and one or more regulatory subunits. Component of the PP4 complex PPP4C-PPP4R1. Interacts with HDAC3. As to quaternary structure, (Microbial infection) Interacts with merkel polyomavirus small tumor antigen; this interaction bridges small tumor antigen with NEMO to inhibit NF-kappa-B. As to expression, widely expressed with high expression in cultured mesangial cells. Isoform 1 and isoform 2 are expressed in renal tissues.

Functionally, regulatory subunit of serine/threonine-protein phosphatase 4. May play a role in regulation of cell division in renal glomeruli. The PPP4C-PPP4R1 PP4 complex may play a role in dephosphorylation and regulation of HDAC3. Plays a role in the inhibition of TNF-induced NF-kappa-B activation by regulating the dephosphorylation of TRAF2. Its function is as follows. (Microbial infection) Participates in merkel polyomavirus-mediated inhibition of NF-kappa-B by bridging viral small tumor antigen with NEMO. This is Serine/threonine-protein phosphatase 4 regulatory subunit 1 (PPP4R1) from Homo sapiens (Human).